The chain runs to 635 residues: Interferon-induced GTP-binding protein Mx1 (635 aa).

The region spanning 31-309 is the Dynamin-type G domain; sequence DLALPAIAVI…LVHHIELSLP (279 aa). A G1 motif region spans residues 41-48; the sequence is GDQSSGKS. 41–48 is a binding site for GTP; that stretch reads GDQSSGKS. Residues 66 to 68 form a G2 motif region; it reads VTR. Residues 147–150 are G3 motif; it reads DLPG. Residues 147–151 and 216–219 contribute to the GTP site; these read DLPGI and TKPD. The tract at residues 216-219 is G4 motif; the sequence is TKPD. A G5 motif region spans residues 248–251; the sequence is RCRG. The region spanning 549–635 is the GED domain; sequence LEELMRHLKS…MEARNYLVKF (87 aa).

This sequence belongs to the TRAFAC class dynamin-like GTPase superfamily. Dynamin/Fzo/YdjA family.

The protein localises to the cytoplasm. This chain is Interferon-induced GTP-binding protein Mx1 (mx1), found in Ictalurus punctatus (Channel catfish).